We begin with the raw amino-acid sequence, 399 residues long: (R)-2-hydroxy-4-methylpentanoate CoA-transferase (399 aa).

The active-site Nucleophile is the Asp171.

Belongs to the CoA-transferase III family. Homodimer.

The enzyme catalyses 4-methylpentanoyl-CoA + (2R)-hydroxy-4-methylpentanoate = (R)-2-hydroxy-4-methylpentanoyl-CoA + 4-methylpentanoate. It participates in amino-acid degradation; L-leucine degradation. In terms of biological role, involved in the reductive branch of L-leucine fermentation. Catalyzes the transfer of the CoA moiety from 4-methylpentanoyl-CoA (isocaproyl-CoA) to (R)-2-hydroxy-4-methylpentanoate ((R)-2-hydroxyisocaproate), leading to the formation of (R)-2-hydroxy-4-methylpentanoyl-CoA. Other CoA thioesters, such as acetyl-CoA or butyryl-CoA, are not accepted as substrates. The chain is (R)-2-hydroxy-4-methylpentanoate CoA-transferase from Clostridioides difficile (Peptoclostridium difficile).